The following is a 231-amino-acid chain: Large ribosomal subunit protein uL1 (231 aa).

It belongs to the universal ribosomal protein uL1 family. In terms of assembly, part of the 50S ribosomal subunit.

Functionally, binds directly to 23S rRNA. The L1 stalk is quite mobile in the ribosome, and is involved in E site tRNA release. In terms of biological role, protein L1 is also a translational repressor protein, it controls the translation of the L11 operon by binding to its mRNA. This Azotobacter vinelandii (strain DJ / ATCC BAA-1303) protein is Large ribosomal subunit protein uL1.